Consider the following 341-residue polypeptide: HTH-type transcriptional repressor PurR (341 aa).

Residues 2 to 56 form the HTH lacI-type domain; it reads ATIKDVAKRAGVSTTTVSHVINKTRFVADETREAVWVAIKELHYSPSAVARSLKV. The segment at residues 4–23 is a DNA-binding region (H-T-H motif); the sequence is IKDVAKRAGVSTTTVSHVIN. A DNA-binding region spans residues 48–56; it reads SAVARSLKV. Residues Tyr73, Arg190, Thr192, Phe221, and Asp275 each contribute to the hypoxanthine site.

In terms of assembly, homodimer.

It participates in purine metabolism; purine nucleotide biosynthesis [regulation]. In terms of biological role, is the main repressor of the genes involved in the de novo synthesis of purine nucleotides, regulating purB, purC, purEK, purF, purHD, purL, purMN and guaBA expression. PurR is allosterically activated to bind its cognate DNA by binding the purine corepressors, hypoxanthine or guanine, thereby effecting transcription repression. The polypeptide is HTH-type transcriptional repressor PurR (Erwinia tasmaniensis (strain DSM 17950 / CFBP 7177 / CIP 109463 / NCPPB 4357 / Et1/99)).